The following is a 320-amino-acid chain: o-succinylbenzoate synthase (320 aa).

Lysine 133 (proton donor) is an active-site residue. Positions 161, 190, and 213 each coordinate Mg(2+). Residue lysine 235 is the Proton acceptor of the active site.

This sequence belongs to the mandelate racemase/muconate lactonizing enzyme family. MenC type 1 subfamily. A divalent metal cation serves as cofactor.

It carries out the reaction (1R,6R)-6-hydroxy-2-succinyl-cyclohexa-2,4-diene-1-carboxylate = 2-succinylbenzoate + H2O. It functions in the pathway quinol/quinone metabolism; 1,4-dihydroxy-2-naphthoate biosynthesis; 1,4-dihydroxy-2-naphthoate from chorismate: step 4/7. The protein operates within quinol/quinone metabolism; menaquinone biosynthesis. Its function is as follows. Converts 2-succinyl-6-hydroxy-2,4-cyclohexadiene-1-carboxylate (SHCHC) to 2-succinylbenzoate (OSB). The protein is o-succinylbenzoate synthase of Escherichia coli O157:H7.